A 176-amino-acid polypeptide reads, in one-letter code: Oleosin Ara h 14.0102 (176 aa).

The residue at position 2 (alanine 2) is an N-acetylalanine; alternate. A run of 2 helical transmembrane segments spans residues 61–81 (GTLLLLSGLSLLGTIIGLAIA) and 87–107 (FFSPVIVPAVVTIGLAVIGIL). The segment at 156–176 (KTKDAGQEIQTKAQDVKRSSS) is disordered.

Belongs to the oleosin family. In terms of assembly, homodimer. Forms oligomers. As to expression, expressed in seeds (at protein level). Not expressed in leaves.

Its subcellular location is the lipid droplet. The protein resides in the membrane. Its function is as follows. May have a structural role to stabilize the lipid body during desiccation of the seed by preventing coalescence of the oil. Probably interacts with both lipid and phospholipid moieties of lipid bodies. May also provide recognition signals for specific lipase anchorage in lipolysis during seedling growth. The polypeptide is Oleosin Ara h 14.0102 (Arachis hypogaea (Peanut)).